Reading from the N-terminus, the 269-residue chain is Hydroxypyruvate/pyruvate aldolase (269 aa).

His48 serves as the catalytic Proton acceptor. A divalent metal cation-binding residues include Glu152 and Asp178.

This sequence belongs to the HpcH/HpaI aldolase family. Requires a divalent metal cation as cofactor.

It catalyses the reaction D-glyceraldehyde + pyruvate = 2-dehydro-3-deoxy-L-galactonate. In terms of biological role, aldolase which can catalyze in vitro the aldolisation reaction between hydroxypyruvate (HPA) or pyruvate (PA) and D-glyceraldehyde (D-GA). The condensation of pyruvate and D-glyceraldehyde produces 2-dehydro-3-deoxy-L-galactonate as the major product. Has weak activity with hydroxypyruvate and D-glyceraldehyde. This is Hydroxypyruvate/pyruvate aldolase from Delftia acidovorans (strain DSM 14801 / SPH-1).